Here is a 726-residue protein sequence, read N- to C-terminus: WD repeat-containing and planar cell polarity effector protein fritz homolog (726 aa).

WD repeat units follow at residues 305 to 343 and 344 to 383; these read LRSKAISCCKNSTEDKLIVGCEDSSVILYEAHRGVTLLA and QAELMPSLISCHPSGAILLVGSNQGELQVFDIALSPINIQ. The segment covering 642 to 660 has biased composition (polar residues); it reads SSGSTPKHTIQQKIPNGPS. Residues 642-717 form a disordered region; sequence SSGSTPKHTI…RRQDTEDVGS (76 aa). The span at 672–685 shows a compositional bias: acidic residues; the sequence is MEETEEEEEEEEEA. Over residues 701–712 the composition is skewed to basic and acidic residues; that stretch reads GELREDHRRQDT.

It belongs to the WD repeat fritz family. As to quaternary structure, component of the CPLANE (ciliogenesis and planar polarity effectors) complex, composed of INTU, FUZ and WDPCP. Interacts with CPLANE1.

It localises to the cell membrane. Its subcellular location is the cytoplasm. It is found in the cytoskeleton. The protein localises to the cilium axoneme. The protein resides in the cilium basal body. Functionally, probable effector of the planar cell polarity signaling pathway which regulates the septin cytoskeleton in both ciliogenesis and collective cell movements. Together with FUZ and WDPCP proposed to function as core component of the CPLANE (ciliogenesis and planar polarity effectors) complex involved in the recruitment of peripheral IFT-A proteins to basal bodies. Binds phosphatidylinositol 3-phosphate with highest affinity, followed by phosphatidylinositol 4-phosphate and phosphatidylinositol 5-phosphate. The polypeptide is WD repeat-containing and planar cell polarity effector protein fritz homolog (Wdpcp) (Rattus norvegicus (Rat)).